Reading from the N-terminus, the 394-residue chain is RILP-like protein 1 (394 aa).

One can recognise an RH1 domain in the interval 2–89 (EGISALEKNV…RLERMDRIEK (88 aa)). Residues 68–327 (EMEELRLELD…EAEEENKLPQ (260 aa)) adopt a coiled-coil conformation. Residues 282-347 (RPRFTLQELR…IPQESGIKRL (66 aa)) enclose the RH2 domain.

Belongs to the RILPL family.

The protein resides in the cytoplasm. The protein localises to the cytosol. Its subcellular location is the cytoskeleton. It is found in the microtubule organizing center. It localises to the centrosome. The protein resides in the cell projection. The protein localises to the cilium. In terms of biological role, plays a role in the regulation of cell shape and polarity. Plays a role in cellular protein transport, including protein transport away from primary cilia. Neuroprotective protein. The polypeptide is RILP-like protein 1 (rilpl1) (Xenopus laevis (African clawed frog)).